Here is a 186-residue protein sequence, read N- to C-terminus: Ribosome-recycling factor (186 aa).

It belongs to the RRF family.

It is found in the cytoplasm. Responsible for the release of ribosomes from messenger RNA at the termination of protein biosynthesis. May increase the efficiency of translation by recycling ribosomes from one round of translation to another. This is Ribosome-recycling factor from Rickettsia conorii (strain ATCC VR-613 / Malish 7).